The following is a 270-amino-acid chain: Homeobox protein vent1B (270 aa).

2 stretches are compositionally biased toward basic and acidic residues: residues 17–26 and 44–59; these read EEAADGKDSM and YAKEMPRRKDGQDVQE. Disordered regions lie at residues 17–66 and 88–134; these read EEAA…SFQC and TWGS…LRTA. A compositionally biased stretch (polar residues) spans 89-99; it reads WGSSDEFSSAG. Positions 116-131 are enriched in basic and acidic residues; that stretch reads QDTDHNGKSTKSDRRL. The segment at residues 128–187 is a DNA-binding region (homeobox); it reads DRRLRTAFSPQQISKLEQAFNKQRYLGASERKKLATSLMLSEIQVKTWFQNRRMKLKRQI.

Expressed in the ventral marginal zone of gastrulae. At the end of gastrulation, predominantly localized to the ventral region of the closing slit blastopore. At early tail bud stage, expression is maintained only in the forming proctodeum.

Its subcellular location is the nucleus. In terms of biological role, probable transcription regulator. Acts in a ventral signaling pathway downstream of bmp4 and vent2B. This is Homeobox protein vent1B (vent1B) from Xenopus laevis (African clawed frog).